The sequence spans 110 residues: Chloride intracellular channel protein 1 (110 aa).

Ala2 bears the N-acetylalanine mark. The interval 2–90 (AEEQPQVELF…EEFLEAVLCP (89 aa)) is required for insertion into the membrane. The residue at position 13 (Lys13) is an N6-acetyllysine. The G-site signature appears at 24–27 (CPFS). Residues Cys24 and Cys59 are joined by a disulfide bond. A helical transmembrane segment spans residues 26–46 (FSQRLFMVLWLKGVTFNVTTV).

Belongs to the chloride channel CLIC family. Monomer. Homodimer (in vitro). Interacts with TRAPPC2. Dimerization requires a conformation change that leads to the exposure of a large hydrophobic surface. In vivo, this may lead to membrane insertion.

It is found in the nucleus. The protein localises to the nucleus membrane. It localises to the cytoplasm. Its subcellular location is the cell membrane. The protein resides in the endoplasmic reticulum. It carries out the reaction L-dehydroascorbate + 2 glutathione = glutathione disulfide + L-ascorbate. It catalyses the reaction chloride(in) = chloride(out). The catalysed reaction is iodide(out) = iodide(in). The enzyme catalyses thiocyanate(in) = thiocyanate(out). It carries out the reaction nitrate(in) = nitrate(out). It catalyses the reaction bromide(in) = bromide(out). The catalysed reaction is fluoride(in) = fluoride(out). Its function is as follows. In the soluble state, catalyzes glutaredoxin-like thiol disulfide exchange reactions with reduced glutathione as electron donor. Reduces selenite and dehydroascorbate and may act as an antioxidant during oxidative stress response. Can insert into membranes and form voltage-dependent multi-ion conductive channels. Membrane insertion seems to be redox-regulated and may occur only under oxidizing conditions. Involved in regulation of the cell cycle. This Sus scrofa (Pig) protein is Chloride intracellular channel protein 1 (CLIC1).